We begin with the raw amino-acid sequence, 307 residues long: Porphobilinogen deaminase (307 aa).

Cysteine 239 carries the post-translational modification S-(dipyrrolylmethanemethyl)cysteine.

The protein belongs to the HMBS family. As to quaternary structure, monomer. Requires dipyrromethane as cofactor.

It catalyses the reaction 4 porphobilinogen + H2O = hydroxymethylbilane + 4 NH4(+). It participates in porphyrin-containing compound metabolism; protoporphyrin-IX biosynthesis; coproporphyrinogen-III from 5-aminolevulinate: step 2/4. In terms of biological role, tetrapolymerization of the monopyrrole PBG into the hydroxymethylbilane pre-uroporphyrinogen in several discrete steps. In Campylobacter jejuni subsp. jejuni serotype O:2 (strain ATCC 700819 / NCTC 11168), this protein is Porphobilinogen deaminase (hemC).